Consider the following 462-residue polypeptide: Elongation factor 1-alpha 1 (462 aa).

At G2 the chain carries N,N,N-trimethylglycine. The 238-residue stretch at 5 to 242 (KTHINIVVIG…DCILPPTRPT (238 aa)) folds into the tr-type G domain. Residues 14–21 (GHVDSGKS) form a G1 region. GTP is bound at residue 14-21 (GHVDSGKS). At K36 the chain carries N6,N6,N6-trimethyllysine; alternate. K36 is modified (N6,N6-dimethyllysine; alternate). K36 carries the N6-methyllysine; alternate modification. At K55 the chain carries N6,N6-dimethyllysine. The tract at residues 70–74 (GITID) is G2. K79 bears the N6,N6,N6-trimethyllysine; by EEF1AKMT1 mark. The G3 stretch occupies residues 91 to 94 (DAPG). GTP is bound at residue 153–156 (NKMD). The G4 stretch occupies residues 153–156 (NKMD). The residue at position 165 (K165) is an N6,N6,N6-trimethyllysine; alternate; by EEF1AKMT3. At K165 the chain carries N6,N6-dimethyllysine; alternate; by EEF1AKMT3. K165 carries the N6-acetyllysine; alternate modification. K165 is modified (N6-methyllysine; alternate; by EEF1AKMT3). K172 is modified (N6-acetyllysine). 194–196 (SGW) contacts GTP. A G5 region spans residues 194–196 (SGW). K273 is modified (N6-acetyllysine). At S300 the chain carries Phosphoserine; by TGFBR1. 5-glutamyl glycerylphosphorylethanolamine is present on E301. K318 carries the N6,N6,N6-trimethyllysine; by EEF1AKMT2 modification. A 5-glutamyl glycerylphosphorylethanolamine modification is found at E374. Residue K385 forms a Glycyl lysine isopeptide (Lys-Gly) (interchain with G-Cter in ubiquitin) linkage. N6-acetyllysine; alternate is present on K392. K392 carries the post-translational modification N6-succinyllysine; alternate. Residue T432 is modified to Phosphothreonine; by PASK. K439 carries the N6-acetyllysine modification.

It belongs to the TRAFAC class translation factor GTPase superfamily. Classic translation factor GTPase family. EF-Tu/EF-1A subfamily. Found in a nuclear export complex with XPO5, EEF1A1, Ran and aminoacylated tRNA. Interacts with PARP1 and TXK. Interacts with KARS1. May interact with ERGIC2. Interacts with IFIT1 (via TPR repeats 4-7). Interacts with DLC1, facilitating distribution to the membrane periphery and ruffles upon growth factor stimulation. Interacts with ZPR1; the interaction occurs in a epidermal growth factor (EGF)-dependent manner. Interacts with PPP1R16B. Interacts with SPHK1 and SPHK2; both interactions increase SPHK1 and SPHK2 kinase activity. Interacts with guanyl-nucleotide exchange factor EEF1B2. Interacts (via middle-region) with HTATIP2 (via N-terminus); the interaction is direct and competes with EEF1A1 binding to guanyl-nucleotide exchange factor EEF1B2, thereby inhibiting GDP for GTP exchange and reactivation of EEF1A1. Interacts with tRNA. Post-translationally, ISGylated. In terms of processing, phosphorylated by TXK. Phosphorylation by PASK increases translation efficiency. Phosphorylated by ROCK2. Phosphorylation by TGFBR1 inhibits translation elongation. Trimethylated at Lys-79 by EEF1AKMT1. Methylated at Lys-165 by EEF1AKMT3, methylation by EEF1AKMT3 is dynamic as well as inducible by stress conditions, such as ER-stress, and plays a regulatory role on mRNA translation. Trimethylated at Lys-318 by EEF1AKMT2. Mono-, di-, and trimethylated at Lys-36 by EEF1AKMT4; trimethylated form is predominant. Methylation by EEF1AKMT4 contributes to the fine-tuning of translation rates for a subset of tRNAs. Trimethylated at Gly-2 by METTL13. Mono- and dimethylated at Lys-55 by METTL13; dimethylated form is predominant. Post-translationally, ubiquitinated at Lys-385 by RNF14 in response to ribosome collisions (ribosome stalling), leading to its degradation by the proteasome and rescue of stalled ribosomes.

It is found in the cytoplasm. The protein localises to the nucleus. It localises to the nucleolus. Its subcellular location is the cell membrane. The catalysed reaction is GTP + H2O = GDP + phosphate + H(+). In terms of biological role, translation elongation factor that catalyzes the GTP-dependent binding of aminoacyl-tRNA (aa-tRNA) to the A-site of ribosomes during the elongation phase of protein synthesis. Base pairing between the mRNA codon and the aa-tRNA anticodon promotes GTP hydrolysis, releasing the aa-tRNA from EEF1A1 and allowing its accommodation into the ribosome. The growing protein chain is subsequently transferred from the P-site peptidyl tRNA to the A-site aa-tRNA, extending it by one amino acid through ribosome-catalyzed peptide bond formation. Also plays a role in the positive regulation of IFNG transcription in T-helper 1 cells as part of an IFNG promoter-binding complex with TXK and PARP1. Also plays a role in cytoskeleton organization by promoting actin bundling. The sequence is that of Elongation factor 1-alpha 1 (EEF1A1) from Bos taurus (Bovine).